Consider the following 485-residue polypeptide: Aspartyl/glutamyl-tRNA(Asn/Gln) amidotransferase subunit B (485 aa).

It belongs to the GatB/GatE family. GatB subfamily. Heterotrimer of A, B and C subunits.

The enzyme catalyses L-glutamyl-tRNA(Gln) + L-glutamine + ATP + H2O = L-glutaminyl-tRNA(Gln) + L-glutamate + ADP + phosphate + H(+). It carries out the reaction L-aspartyl-tRNA(Asn) + L-glutamine + ATP + H2O = L-asparaginyl-tRNA(Asn) + L-glutamate + ADP + phosphate + 2 H(+). In terms of biological role, allows the formation of correctly charged Asn-tRNA(Asn) or Gln-tRNA(Gln) through the transamidation of misacylated Asp-tRNA(Asn) or Glu-tRNA(Gln) in organisms which lack either or both of asparaginyl-tRNA or glutaminyl-tRNA synthetases. The reaction takes place in the presence of glutamine and ATP through an activated phospho-Asp-tRNA(Asn) or phospho-Glu-tRNA(Gln). This chain is Aspartyl/glutamyl-tRNA(Asn/Gln) amidotransferase subunit B, found in Borrelia hermsii (strain HS1 / DAH).